A 36-amino-acid chain; its full sequence is ADNRRPIWVMLLSSYWQDGNSLGVDAIMTNYPEDVK.

It belongs to the arthropod phospholipase D family. Class II subfamily. Mg(2+) is required as a cofactor. In terms of processing, contains 2 disulfide bonds. In terms of tissue distribution, expressed by the venom gland.

The protein localises to the secreted. It catalyses the reaction an N-(acyl)-sphingosylphosphocholine = an N-(acyl)-sphingosyl-1,3-cyclic phosphate + choline. It carries out the reaction an N-(acyl)-sphingosylphosphoethanolamine = an N-(acyl)-sphingosyl-1,3-cyclic phosphate + ethanolamine. The enzyme catalyses a 1-acyl-sn-glycero-3-phosphocholine = a 1-acyl-sn-glycero-2,3-cyclic phosphate + choline. The catalysed reaction is a 1-acyl-sn-glycero-3-phosphoethanolamine = a 1-acyl-sn-glycero-2,3-cyclic phosphate + ethanolamine. Functionally, dermonecrotic toxins cleave the phosphodiester linkage between the phosphate and headgroup of certain phospholipids (sphingolipid and lysolipid substrates), forming an alcohol (often choline) and a cyclic phosphate. This toxin acts on sphingomyelin (SM). It may also act on ceramide phosphoethanolamine (CPE), lysophosphatidylcholine (LPC) and lysophosphatidylethanolamine (LPE), but not on lysophosphatidylserine (LPS), and lysophosphatidylglycerol (LPG). It acts by transphosphatidylation, releasing exclusively cyclic phosphate products as second products. Induces dermonecrosis, hemolysis, increased vascular permeability, edema, inflammatory response, and platelet aggregation. In Loxosceles gaucho (Spider), this protein is Dermonecrotic toxin LgSicTox-beta-LOXN1/LOXN7.